A 327-amino-acid polypeptide reads, in one-letter code: 2-oxoglutarate-dependent dioxygenase traH (327 aa).

One can recognise a Fe2OG dioxygenase domain in the interval 183–290 (TTDAAMFLKL…YAVPAFWHGD (108 aa)). H211, D213, and H270 together coordinate Fe cation. 2-oxoglutarate is bound at residue R280.

It belongs to the iron/ascorbate-dependent oxidoreductase family. Fe(2+) serves as cofactor.

Its pathway is secondary metabolite biosynthesis. 2-oxoglutarate-dependent dioxygenase; part of the tra gene cluster that produces terrestric acid. The clavatol biosynthesis cluster cla and the terrestric acid cluster tra are both involved in the production of peniphenones and penilactones. The non-reducing PKS claF is responsible for the formation of clavatol from successive condensations of 3 malonyl-CoA units, presumably with a simple acetyl-CoA starter unit, and 2 methylation steps. The esterase claE probably collaborates with claF by catalyzing the hydrolysis of ACP-bound acyl intermediates to free the ACP from stalled intermediates. The clavatol oxidase claD then converts clavatol to hydroxyclavatol. Spontaneous dehydration of hydroxyclavatol leads to the accumulation of the highly active ortho-quinone methide. On the other hand, the PKS-NRPS hybrid traA is involved in the formation of crustosic acid, with the help of traB and traD. The polyketide synthase module (PKS) of traA is responsible for the synthesis of the polyketide backbone via the condensation of an acetyl-CoA starter unit with 3 malonyl-CoA units. The downstream nonribosomal peptide synthetase (NRPS) module then amidates the carboxyl end of the polyketide with L-malic acid. Because traA lacks a designated enoylreductase (ER) domain, the required activity is provided the enoyl reductase traG. Crustosic acid undergoes decarboxylation and isomerization to the terrestric acid, catalyzed by the 2-oxoglutarate-dependent dioxygenase traH. Both acids are further converted to the 2 gamma-butyrolactones (R)-5-methyltetronic acid and (S)-5-carboxylmethyltetronic acid, with involvement of the cytochrome P450 monooxygenase claJ. Spontaneous addition of the methide to these gamma-butyrolactones leads to peniphenone D and penilactone D, which undergo again stereospecific attacking by methide to give penilactones A and B. The polypeptide is 2-oxoglutarate-dependent dioxygenase traH (Penicillium crustosum (Blue mold fungus)).